Here is a 351-residue protein sequence, read N- to C-terminus: Ferrochelatase (351 aa).

Fe cation is bound by residues histidine 221 and glutamate 302.

The protein belongs to the ferrochelatase family.

It is found in the cytoplasm. The enzyme catalyses heme b + 2 H(+) = protoporphyrin IX + Fe(2+). It functions in the pathway porphyrin-containing compound metabolism; protoheme biosynthesis; protoheme from protoporphyrin-IX: step 1/1. Catalyzes the ferrous insertion into protoporphyrin IX. The polypeptide is Ferrochelatase (Bradyrhizobium sp. (strain BTAi1 / ATCC BAA-1182)).